We begin with the raw amino-acid sequence, 348 residues long: tRNA N6-adenosine threonylcarbamoyltransferase (348 aa).

The Fe cation site is built by histidine 116 and histidine 120. Substrate-binding positions include 138 to 142 (QVSGG), aspartate 171, glycine 184, aspartate 188, and asparagine 277. Aspartate 309 serves as a coordination point for Fe cation.

It belongs to the KAE1 / TsaD family. Fe(2+) is required as a cofactor.

It localises to the cytoplasm. It carries out the reaction L-threonylcarbamoyladenylate + adenosine(37) in tRNA = N(6)-L-threonylcarbamoyladenosine(37) in tRNA + AMP + H(+). In terms of biological role, required for the formation of a threonylcarbamoyl group on adenosine at position 37 (t(6)A37) in tRNAs that read codons beginning with adenine. Is involved in the transfer of the threonylcarbamoyl moiety of threonylcarbamoyl-AMP (TC-AMP) to the N6 group of A37, together with TsaE and TsaB. TsaD likely plays a direct catalytic role in this reaction. The chain is tRNA N6-adenosine threonylcarbamoyltransferase from Lactobacillus gasseri (strain ATCC 33323 / DSM 20243 / BCRC 14619 / CIP 102991 / JCM 1131 / KCTC 3163 / NCIMB 11718 / NCTC 13722 / AM63).